The sequence spans 280 residues: Energy-coupling factor transporter ATP-binding protein EcfA2 (280 aa).

Positions 3–245 (IEFKNVSYTY…VELLESKQLG (243 aa)) constitute an ABC transporter domain. 40 to 47 (GHTGSGKS) is a binding site for ATP.

Belongs to the ABC transporter superfamily. Energy-coupling factor EcfA family. As to quaternary structure, forms a stable energy-coupling factor (ECF) transporter complex composed of 2 membrane-embedded substrate-binding proteins (S component), 2 ATP-binding proteins (A component) and 2 transmembrane proteins (T component).

It is found in the cell membrane. In terms of biological role, ATP-binding (A) component of a common energy-coupling factor (ECF) ABC-transporter complex. Unlike classic ABC transporters this ECF transporter provides the energy necessary to transport a number of different substrates. The chain is Energy-coupling factor transporter ATP-binding protein EcfA2 from Streptococcus agalactiae serotype Ia (strain ATCC 27591 / A909 / CDC SS700).